The primary structure comprises 670 residues: DNA mismatch repair protein MutL (670 aa).

Positions 363–451 are disordered; it reads SFDRGRPLSR…RAAGGPASTH (89 aa). Residues 379 to 389 show a composition bias toward basic and acidic residues; that stretch reads ERWRERHRPDA.

It belongs to the DNA mismatch repair MutL/HexB family.

In terms of biological role, this protein is involved in the repair of mismatches in DNA. It is required for dam-dependent methyl-directed DNA mismatch repair. May act as a 'molecular matchmaker', a protein that promotes the formation of a stable complex between two or more DNA-binding proteins in an ATP-dependent manner without itself being part of a final effector complex. In Syntrophobacter fumaroxidans (strain DSM 10017 / MPOB), this protein is DNA mismatch repair protein MutL.